A 919-amino-acid chain; its full sequence is Glutamate receptor ionotropic, kainate 3 (919 aa).

The first 31 residues, 1 to 31 (MTAPWRRLRSLVWEYWAGLLVCAFWIPDSRG), serve as a signal peptide directing secretion. At 32-563 (MPHVIRIGGI…VFSFLNPLSP (532 aa)) the chain is on the extracellular side. 7 N-linked (GlcNAc...) asparagine glycosylation sites follow: asparagine 70, asparagine 76, asparagine 278, asparagine 381, asparagine 415, asparagine 426, and asparagine 433. Cysteine 99 and cysteine 350 are disulfide-bonded. L-glutamate contacts are provided by proline 518, threonine 520, and arginine 525. 2 N-linked (GlcNAc...) asparagine glycosylation sites follow: asparagine 548 and asparagine 551. A helical transmembrane segment spans residues 564–584 (DIWMYVLLAYLGVSCVLFVIA). At 585–636 (RFSPYEWYDAHPCNPGSEVVENNFTLLNSFWFGMGSLMQQGSELMPKALSTR) the chain is on the cytoplasmic side. The helical transmembrane segment at 637 to 657 (IIGGIWWFFTLIIISSYTANL) threads the bilayer. The Extracellular segment spans residues 658-820 (AAFLTVERME…KEASALGIQK (163 aa)). L-glutamate-binding residues include alanine 691, threonine 692, and glutamate 739. Residue asparagine 752 is glycosylated (N-linked (GlcNAc...) asparagine). Residues 821–841 (IGGIFIVLAAGLVLSVLVAVG) traverse the membrane as a helical segment. Over 842 to 919 (EFVYKLRKTA…CSTSLAPVFP (78 aa)) the chain is Cytoplasmic. Serine 869 is modified (phosphoserine). A Glycyl lysine isopeptide (Lys-Gly) (interchain with G-Cter in SUMO1) cross-link involves residue lysine 887.

This sequence belongs to the glutamate-gated ion channel (TC 1.A.10.1) family. GRIK3 subfamily. In terms of assembly, homotetramer, and heterotetramer with either GRIK4 or GRIK5. Can form functional heteromeric receptors with GRIK2. Interacts with PRKCABP. Interacts with NETO2.

It is found in the cell membrane. The protein resides in the postsynaptic cell membrane. It carries out the reaction Ca(2+)(in) = Ca(2+)(out). Its function is as follows. Ionotropic glutamate receptor that functions as a cation-permeable ligand-gated ion channel, gated by L-glutamate and the glutamatergic agonist kainic acid. Binding of the excitatory neurotransmitter L-glutamate induces a conformation change, leading to the opening of the cation channel, and thereby converts the chemical signal to an electrical impulse. The receptor then desensitizes rapidly and enters a transient inactive state, characterized by the presence of bound agonist. In association with GRIK2, involved in presynaptic facilitation of glutamate release at hippocampal mossy fiber synapses. This chain is Glutamate receptor ionotropic, kainate 3 (GRIK3), found in Homo sapiens (Human).